The following is a 725-amino-acid chain: N-alpha-acetyltransferase 35, NatC auxiliary subunit (725 aa).

Residues 548 to 573 are disordered; that stretch reads ERIMEEQQKGRSSKKTKKKKKVRPLS. Residues 558–571 show a composition bias toward basic residues; that stretch reads RSSKKTKKKKKVRP.

The protein belongs to the MAK10 family. Component of the N-terminal acetyltransferase C (NatC) complex, which is composed of NAA35, NAA38 and NAA30. In terms of tissue distribution, expressed in primary spermatocytes, basal epidermis, interstitial fibroblasts of skeletal muscle, and intestinal crypts.

The protein resides in the cytoplasm. Its function is as follows. Auxillary component of the N-terminal acetyltransferase C (NatC) complex which catalyzes acetylation of N-terminal methionine residues. N-terminal acetylation protects proteins from ubiquitination and degradation by the N-end rule pathway. Involved in regulation of apoptosis and proliferation of smooth muscle cells. The sequence is that of N-alpha-acetyltransferase 35, NatC auxiliary subunit (Naa35) from Rattus norvegicus (Rat).